The chain runs to 580 residues: MATPAGRRASETERLLTPNPGYGTQVGTSPAPTTPTEEEDLRRRLKYFFMSPCDKFRAKGRKPCKLMLQVVKILVVTVQLILFGLSNQLVVTFREENTIAFRHLFLLGYSDGSDDTFAAYTQEQLYQAIFYAVDQYLILPEISLGRYAYVRGGGGPWANGSALALCQRYYHRGHVDPANDTFDIDPRVVTDCIQVDPPDRPPDIPSEDLDFLDGSASYKNLTLKFHKLINVTIHFQLKTINLQSLINNEIPDCYTFSILITFDNKAHSGRIPIRLETKTHIQECKHPSVSRHGDNSFRLLFDVVVILTCSLSFLLCARSLLRGFLLQNEFVVFMWRRRGREISLWERLEFVNGWYILLVTSDVLTISGTVMKIGIEAKNLASYDVCSILLGTSTLLVWVGVIRYLTFFHKYNILIATLRVALPSVMRFCCCVAVIYLGYCFCGWIVLGPYHVKFRSLSMVSECLFSLINGDDMFVTFAAMQAQQGHSSLVWLFSQLYLYSFISLFIYMVLSLFIALITGAYDTIKHPGGTGTEKSELQAYIEQCQDSPTSGKFRRGSGSACSLFCCCGRDSPEDHSLLVN.

The interval 1–38 is disordered; the sequence is MATPAGRRASETERLLTPNPGYGTQVGTSPAPTTPTEE. At 1–65 the chain is on the cytoplasmic side; that stretch reads MATPAGRRAS…FRAKGRKPCK (65 aa). At S10 the chain carries Phosphoserine. The Dileucine motif; mediates targeting to lysosomes motif lies at 11–16; the sequence is ETERLL. The segment at 42-62 is interaction with phosphoinositides; the sequence is RRRLKYFFMSPCDKFRAKGRK. The chain crosses the membrane as a helical span at residues 66–86; it reads LMLQVVKILVVTVQLILFGLS. The Extracellular portion of the chain corresponds to 87-298; sequence NQLVVTFREE…VSRHGDNSFR (212 aa). Positions 107 to 121 are extracellular/lumenal pore loop; it reads LGYSDGSDDTFAAYT. An intrachain disulfide couples C166 to C192. Residues N220 and N230 are each glycosylated (N-linked (GlcNAc...) asparagine). An intrachain disulfide couples C253 to C284. Residues 299-321 traverse the membrane as a helical segment; sequence LLFDVVVILTCSLSFLLCARSLL. Topologically, residues 322–350 are cytoplasmic; it reads RGFLLQNEFVVFMWRRRGREISLWERLEF. The chain crosses the membrane as a helical span at residues 351–371; sequence VNGWYILLVTSDVLTISGTVM. The Extracellular portion of the chain corresponds to 372–382; that stretch reads KIGIEAKNLAS. A helical membrane pass occupies residues 383-405; sequence YDVCSILLGTSTLLVWVGVIRYL. Residues 406-427 lie on the Cytoplasmic side of the membrane; that stretch reads TFFHKYNILIATLRVALPSVMR. Residues 428 to 448 form a helical membrane-spanning segment; sequence FCCCVAVIYLGYCFCGWIVLG. The Extracellular portion of the chain corresponds to 449 to 456; the sequence is PYHVKFRS. Residues 457–477 constitute an intramembrane region (pore-forming); that stretch reads LSMVSECLFSLINGDDMFVTF. Positions 469–474 match the Selectivity filter motif; it reads NGDDMF. Over 478–491 the chain is Extracellular; sequence AAMQAQQGHSSLVW. Residues 492–513 form a helical membrane-spanning segment; the sequence is LFSQLYLYSFISLFIYMVLSLF. At 514–580 the chain is on the cytoplasmic side; that stretch reads IALITGAYDT…SPEDHSLLVN (67 aa). Phosphoserine is present on S557. S559 bears the Phosphoserine; by PAK mark. Positions 565–567 are required for palmitoylation and association with membranes; sequence CCC. A Dileucine internalization motif; mediates AP2 complex-dependent internalization motif is present at residues 573–578; the sequence is EDHSLL.

Belongs to the transient receptor (TC 1.A.4) family. Polycystin subfamily. MCOLN1 sub-subfamily. Homotetramer. Homooligomer. Can heterooligomerize with MCOLN2 or MCOLN3; heteromeric assemblies have different channel properties as compared to the respective homooligomers and may be tissue-specific. Interacts with PDCD6. Interacts with TMEM163. Interacts with LAPTM4B. Palmitoylated; involved in association with membranes. In terms of processing, phosphorylation by PKA inhibits channel activity. Dephosphorylation increases activity. Post-translationally, proteolytically cleaved probably involving multiple lysosomal proteases including cathepsin B; inhibits lysosomal channel activity. In terms of tissue distribution, widely expressed, with the highest expression in brain, liver and kidney.

The protein localises to the late endosome membrane. Its subcellular location is the lysosome membrane. It is found in the cytoplasmic vesicle membrane. The protein resides in the cell projection. It localises to the phagocytic cup. The protein localises to the cytoplasmic vesicle. Its subcellular location is the phagosome membrane. It is found in the cell membrane. The enzyme catalyses Ca(2+)(in) = Ca(2+)(out). It carries out the reaction Fe(2+)(in) = Fe(2+)(out). The catalysed reaction is Mg(2+)(in) = Mg(2+)(out). It catalyses the reaction K(+)(in) = K(+)(out). The enzyme catalyses Na(+)(in) = Na(+)(out). With respect to regulation, channel activity is controlled by multiple regulatory mechanisms in different subcellular compartments. Lower pH by itself has an inhibitory effect on channel conductance. Channel function is transiently modulated by changes in Ca(2+) in a pH-dependent manner; pH changes modify the aggregation state of unitary channels; a negative cooperativity between extracellular/lumenal Ca(2+) and H(+) is suggested. Fe(2+) channel activity is potentiated by low pH. Regulated by phosphoinositides in a compartment-specific manner: in lysosomes activated by PtdIns(3,5)P2 (Phosphatidylinositol 3,5-bisphosphate) and at the plasma membrane inhibited by PtdIns(4,5)P2 (Phosphatidylinositol 4,5-bisphosphate). Nonselective cation channel probably playing a role in the regulation of membrane trafficking events and of metal homeostasis. Acts as a Ca(2+)-permeable cation channel with inwardly rectifying activity. Proposed to play a major role in Ca(2+) release from late endosome and lysosome vesicles to the cytoplasm, which is important for many lysosome-dependent cellular events, including the fusion and trafficking of these organelles, exocytosis and autophagy. Required for efficient uptake of large particles in macrophages in which Ca(2+) release from the lysosomes triggers lysosomal exocytosis. May also play a role in phagosome-lysosome fusion. Involved in lactosylceramide trafficking indicative for a role in the regulation of late endocytic membrane fusion/fission events. By mediating lysosomal Ca(2+) release is involved in regulation of mTORC1 signaling and in mTOR/TFEB-dependent lysosomal adaptation to environmental cues such as nutrient levels. Seems to act as lysosomal active oxygen species (ROS) sensor involved in ROS-induced TFEB activation and autophagy. Also functions as a Fe(2+) permeable channel in late endosomes and lysosomes. Also permeable to Mg(2+), Na(+). K(+) and Cs(+). Proposed to play a role in zinc homeostasis probably implicating its association with TMEM163. In adaptive immunity, TRPML2 and TRPML1 may play redundant roles in the function of the specialized lysosomes of B cells. In terms of biological role, may contribute to cellular lipase activity within the late endosomal pathway or at the cell surface which may be involved in processes of membrane reshaping and vesiculation, especially the growth of tubular structures. However, it is not known, whether it conveys the enzymatic activity directly, or merely facilitates the activity of an associated phospholipase. The polypeptide is Mucolipin-1 (Mus musculus (Mouse)).